Here is a 511-residue protein sequence, read N- to C-terminus: Pancreatic alpha-amylase (511 aa).

Positions 1-15 (MKFFLLLFTIGFCWA) are cleaved as a signal peptide. Residue glutamine 16 is modified to Pyrrolidone carboxylic acid. Intrachain disulfides connect cysteine 43-cysteine 101, cysteine 85-cysteine 130, and cysteine 156-cysteine 175. The Ca(2+) site is built by asparagine 115, arginine 173, and aspartate 182. Arginine 210 is a chloride binding site. The Nucleophile role is filled by aspartate 212. Residue histidine 216 coordinates Ca(2+). The Proton donor role is filled by glutamate 248. The chloride site is built by asparagine 313 and arginine 352. Intrachain disulfides connect cysteine 393-cysteine 399 and cysteine 465-cysteine 477. Asparagine 476 is a glycosylation site (N-linked (GlcNAc...) asparagine).

This sequence belongs to the glycosyl hydrolase 13 family. As to quaternary structure, monomer. Binds to the sea anemone inhibitor helianthamide. Ca(2+) is required as a cofactor. It depends on chloride as a cofactor. Detected in pancreas (at protein level).

It is found in the secreted. Its subcellular location is the extracellular space. It carries out the reaction Endohydrolysis of (1-&gt;4)-alpha-D-glucosidic linkages in polysaccharides containing three or more (1-&gt;4)-alpha-linked D-glucose units.. The chain is Pancreatic alpha-amylase (AMY2A) from Homo sapiens (Human).